A 469-amino-acid chain; its full sequence is Tetratricopeptide repeat protein 38 (469 aa).

TPR repeat units lie at residues 107 to 140 (REKL…HPTD), 179 to 212 (SYVK…ERTD), and 251 to 284 (CHVY…QCFA).

The protein belongs to the TTC38 family.

The polypeptide is Tetratricopeptide repeat protein 38 (ttc38) (Xenopus laevis (African clawed frog)).